The following is a 320-amino-acid chain: Lipoyl synthase (320 aa).

Residues 1–11 (MGGMNDLSSTP) show a composition bias toward polar residues. The disordered stretch occupies residues 1-24 (MGGMNDLSSTPAPEGDRPARQRKP). Residues 14 to 24 (EGDRPARQRKP) are compositionally biased toward basic and acidic residues. [4Fe-4S] cluster contacts are provided by C53, C58, C64, C79, C83, C86, and S293. Residues 65-282 (WTKKHATVMI…GAIARAKGFL (218 aa)) form the Radical SAM core domain.

The protein belongs to the radical SAM superfamily. Lipoyl synthase family. Requires [4Fe-4S] cluster as cofactor.

The protein localises to the cytoplasm. It catalyses the reaction [[Fe-S] cluster scaffold protein carrying a second [4Fe-4S](2+) cluster] + N(6)-octanoyl-L-lysyl-[protein] + 2 oxidized [2Fe-2S]-[ferredoxin] + 2 S-adenosyl-L-methionine + 4 H(+) = [[Fe-S] cluster scaffold protein] + N(6)-[(R)-dihydrolipoyl]-L-lysyl-[protein] + 4 Fe(3+) + 2 hydrogen sulfide + 2 5'-deoxyadenosine + 2 L-methionine + 2 reduced [2Fe-2S]-[ferredoxin]. It participates in protein modification; protein lipoylation via endogenous pathway; protein N(6)-(lipoyl)lysine from octanoyl-[acyl-carrier-protein]: step 2/2. Functionally, catalyzes the radical-mediated insertion of two sulfur atoms into the C-6 and C-8 positions of the octanoyl moiety bound to the lipoyl domains of lipoate-dependent enzymes, thereby converting the octanoylated domains into lipoylated derivatives. The chain is Lipoyl synthase from Erythrobacter litoralis (strain HTCC2594).